The primary structure comprises 362 residues: 3-isopropylmalate dehydrogenase (362 aa).

77–88 (GPKWGTGAVRPE) serves as a coordination point for NAD(+). Residues R95, R105, R134, and D223 each contribute to the substrate site. Residues D223, D248, and D252 each contribute to the Mg(2+) site. An NAD(+)-binding site is contributed by 287–298 (GSAPDLPANKVN).

It belongs to the isocitrate and isopropylmalate dehydrogenases family. Homodimer. Requires Mg(2+) as cofactor. The cofactor is Mn(2+).

It localises to the cytoplasm. It catalyses the reaction (2R,3S)-3-isopropylmalate + NAD(+) = 4-methyl-2-oxopentanoate + CO2 + NADH. It participates in amino-acid biosynthesis; L-leucine biosynthesis; L-leucine from 3-methyl-2-oxobutanoate: step 3/4. Functionally, catalyzes the oxidation of 3-carboxy-2-hydroxy-4-methylpentanoate (3-isopropylmalate) to 3-carboxy-4-methyl-2-oxopentanoate. The product decarboxylates to 4-methyl-2 oxopentanoate. This chain is 3-isopropylmalate dehydrogenase (LEU2), found in Kluyveromyces lactis (strain ATCC 8585 / CBS 2359 / DSM 70799 / NBRC 1267 / NRRL Y-1140 / WM37) (Yeast).